The primary structure comprises 77 residues: Acyl carrier protein (77 aa).

Positions 2–77 constitute a Carrier domain; it reads SDVAERVKKI…DAIDFITANS (76 aa). O-(pantetheine 4'-phosphoryl)serine is present on S37.

The protein belongs to the acyl carrier protein (ACP) family. Post-translationally, 4'-phosphopantetheine is transferred from CoA to a specific serine of apo-ACP by AcpS. This modification is essential for activity because fatty acids are bound in thioester linkage to the sulfhydryl of the prosthetic group.

It localises to the cytoplasm. It participates in lipid metabolism; fatty acid biosynthesis. Carrier of the growing fatty acid chain in fatty acid biosynthesis. This chain is Acyl carrier protein, found in Paramagnetospirillum magneticum (strain ATCC 700264 / AMB-1) (Magnetospirillum magneticum).